We begin with the raw amino-acid sequence, 180 residues long: Acireductone dioxygenase (180 aa).

Residues His-97, His-99, Glu-103, and His-141 each contribute to the Fe(2+) site. 4 residues coordinate Ni(2+): His-97, His-99, Glu-103, and His-141.

Belongs to the acireductone dioxygenase (ARD) family. Monomer. Fe(2+) serves as cofactor. It depends on Ni(2+) as a cofactor.

It carries out the reaction 1,2-dihydroxy-5-(methylsulfanyl)pent-1-en-3-one + O2 = 3-(methylsulfanyl)propanoate + CO + formate + 2 H(+). The enzyme catalyses 1,2-dihydroxy-5-(methylsulfanyl)pent-1-en-3-one + O2 = 4-methylsulfanyl-2-oxobutanoate + formate + 2 H(+). It functions in the pathway amino-acid biosynthesis; L-methionine biosynthesis via salvage pathway; L-methionine from S-methyl-5-thio-alpha-D-ribose 1-phosphate: step 5/6. In terms of biological role, catalyzes 2 different reactions between oxygen and the acireductone 1,2-dihydroxy-3-keto-5-methylthiopentene (DHK-MTPene) depending upon the metal bound in the active site. Fe-containing acireductone dioxygenase (Fe-ARD) produces formate and 2-keto-4-methylthiobutyrate (KMTB), the alpha-ketoacid precursor of methionine in the methionine recycle pathway. Ni-containing acireductone dioxygenase (Ni-ARD) produces methylthiopropionate, carbon monoxide and formate, and does not lie on the methionine recycle pathway. This chain is Acireductone dioxygenase, found in Citrobacter koseri (strain ATCC BAA-895 / CDC 4225-83 / SGSC4696).